Consider the following 237-residue polypeptide: Glutathione-independent glyoxalase HSP31 (237 aa).

Active-site residues include cysteine 138, histidine 139, and glutamate 170. The residue at position 138 (cysteine 138) is a Cysteine sulfinic acid (-SO2H).

The protein belongs to the peptidase C56 family. HSP31-like subfamily. Homodimer. Post-translationally, cys-138 is easily oxidized to sulfinic acid.

The protein localises to the cytoplasm. Its subcellular location is the P-body. It catalyses the reaction methylglyoxal + H2O = (R)-lactate + H(+). Its function is as follows. Catalyzes the conversion of methylglyoxal (MG) to D-lactate in a single glutathione (GSH)-independent step. May play a role in detoxifying endogenously produced glyoxals. Involved in protection against reactive oxygen species (ROS). Important for viability in stationary phase. May negatively regulate TORC1 in response to nutrient limitation. The polypeptide is Glutathione-independent glyoxalase HSP31 (Saccharomyces cerevisiae (strain ATCC 204508 / S288c) (Baker's yeast)).